The chain runs to 326 residues: Putative ubiquitin-conjugating enzyme E2 38 (326 aa).

Residues 54–214 (NWVKKVQDEW…VFLLSLKTMV (161 aa)) enclose the UBC core domain. The active-site Glycyl thioester intermediate is Cys-140. The tract at residues 297–326 (LAEKPKPPVNNANTENQSKKKTRKRSRSSR) is disordered. The segment covering 315 to 326 (KKKTRKRSRSSR) has biased composition (basic residues).

The protein belongs to the ubiquitin-conjugating enzyme family.

It carries out the reaction S-ubiquitinyl-[E1 ubiquitin-activating enzyme]-L-cysteine + [E2 ubiquitin-conjugating enzyme]-L-cysteine = [E1 ubiquitin-activating enzyme]-L-cysteine + S-ubiquitinyl-[E2 ubiquitin-conjugating enzyme]-L-cysteine.. It functions in the pathway protein modification; protein ubiquitination. Functionally, accepts the ubiquitin from the E1 complex and catalyzes its covalent attachment to other proteins. The polypeptide is Putative ubiquitin-conjugating enzyme E2 38 (UBC38) (Arabidopsis thaliana (Mouse-ear cress)).